The chain runs to 184 residues: MGLEEKLPSGFVLTTVEQAAGWVRKSSVFPATFGLACCAIEMMTTGAGRYDLARFGMEVFRGSPRQADLMIVAGRVSQKMAPVLRQVYDQMPNPKWVISMGVCASSGGMFNNYAIVQGVDHIVPVDIYLPGCPPRPEMLLDAILKLHQKIQTSKLGVNAEEAAREAEEAALKALPLIEMKGLLR.

[4Fe-4S] cluster-binding residues include Cys-37, Cys-38, Cys-103, and Cys-132.

It belongs to the complex I 20 kDa subunit family. In terms of assembly, NDH-1 is composed of 14 different subunits. Subunits NuoB, C, D, E, F, and G constitute the peripheral sector of the complex. [4Fe-4S] cluster is required as a cofactor.

Its subcellular location is the cell membrane. The catalysed reaction is a quinone + NADH + 5 H(+)(in) = a quinol + NAD(+) + 4 H(+)(out). NDH-1 shuttles electrons from NADH, via FMN and iron-sulfur (Fe-S) centers, to quinones in the respiratory chain. The immediate electron acceptor for the enzyme in this species is believed to be a menaquinone. Couples the redox reaction to proton translocation (for every two electrons transferred, four hydrogen ions are translocated across the cytoplasmic membrane), and thus conserves the redox energy in a proton gradient. This Streptomyces griseus subsp. griseus (strain JCM 4626 / CBS 651.72 / NBRC 13350 / KCC S-0626 / ISP 5235) protein is NADH-quinone oxidoreductase subunit B 1.